A 343-amino-acid polypeptide reads, in one-letter code: MQEALLPPAHPGRFYSDFGPKPFGSGDQRLSSPNLLTNGGDLFYGCYSPFSPTRVLSPPPPRRAASFSHCSSSSDSVVDDGDGAGAAAATEHRLHLAHLALQYQEMANRFELCLSHLADAADEAAALRQENAELRVANNDLACRIAKFGGRQSSAIALAGDLRRLRLPKEQTVPALPPPPQSPPAALMNPVAVPEKQAVLPKSISIRSTGYQKLNQGGKHRVSKPVNVGSQRVFVGIDGAEGGEHKVGVKKEEPPMGGLEFEVYNQGMFKTELCNKWEETGACPYGDQCQFAHGVAELRPVIRHPRYKTQVCRMVLAGGVCPYGHRCHFRHSITPADRFSFGH.

Residues 114–147 (LSHLADAADEAAALRQENAELRVANNDLACRIAK) adopt a coiled-coil conformation. 2 consecutive C3H1-type zinc fingers follow at residues 268 to 296 (MFKTELCNKWEETGACPYGDQCQFAHGVA) and 306 to 334 (RYKTQVCRMVLAGGVCPYGHRCHFRHSIT).

The sequence is that of Zinc finger CCCH domain-containing protein 39 from Oryza sativa subsp. japonica (Rice).